The primary structure comprises 176 residues: Sigma intracellular receptor 2 (176 aa).

Topologically, residues 1–9 (MGTLGARRG) are cytoplasmic. The chain crosses the membrane as a helical span at residues 10-30 (LEWFLGFYFLSHIPITLLMDL). The EXPERA domain occupies 10–158 (LEWFLGFYFL…PYFLIPLILL (149 aa)). The Lumenal segment spans residues 31–68 (QGVLPRDLYPVELRNLQQWYIEEFKDPLLQTPPAWFKS). A helical membrane pass occupies residues 69 to 89 (FLFCELVFQLPFFPIAAYAFF). Positions 75 and 77 each coordinate cholesterol. The Cytoplasmic segment spans residues 90 to 99 (KGGCKWIRTP). Residues 100 to 120 (AIIYSVHTMTTLIPILSTLLL) form a helical membrane-spanning segment. The Lumenal segment spans residues 121-141 (DDFSKASHFRGQGPKTFQERL). Residues 142–162 (FLISVYIPYFLIPLILLLFMV) traverse the membrane as a helical segment. Over 163–176 (RNPYYKSEEKRKKK) the chain is Cytoplasmic. An ER retention motif motif is present at residues 172-176 (KRKKK).

Belongs to the TMEM97/sigma-2 receptor family. In terms of assembly, homodimer. Interacts with NPC1; the interaction impairs NPC1-mediated cholesterol transport. Interacts with PGRMC1 and LDLR; the interaction increases LDL internalization. Interacts with histatin 1/HTN1; the interaction induces HTN1-stimulating wound healing. Interacts with TSPO.

Its subcellular location is the rough endoplasmic reticulum membrane. The protein resides in the nucleus membrane. Its function is as follows. Sigma-2 receptor which contributes to ameliorate dysfunctional cellular processes and slow degenerative progression by regulating cell functions including cholesterol biosynthesis/trafficking, membrane trafficking, autophagy, lipid membrane-bound protein trafficking, and receptor stabilization at the cell surface. Forms a ternary complex with PGRMC1 receptor and low density lipoprotein receptor/LDLR at the plasma membrane, which increases LDLR-mediated LDL cholesterol internalization. Decreases lysosomal sterol transporter NPC1 availability to the cell, probably through NPC1-binding, hence controlling lipid transport, including cholesterol and LBPA, outside of late endosome/lysosome. Binds regio- and stereoselective ligand 20(S)-hydroxycholesterol (20(S)-OHC) which enhances TMEM97-NPC1 interaction and decreases TMEM97-PGRMC1 and TMEM97-TSPO interactions, thereby linking OHC binding to cholesterol homeostasis. Also able to bind cholesterol. Binds histatin 1 (Hst 1)/HN1 salivary peptide at the ER membrane, which is critical for increasing mitochondria-ER contacts and stimulating Hst1 wound healing properties. May alter the activity of some cytochrome P450 proteins. Although shows homologies with sterol isomerases (EXPERA domain), not able to catalyze sterol isomerization. However, may act as sensors of these molecules. Acts as a quality control factor in the ER, promoting the proteolytic degradation of nonproductive and extramitochondrial precursor proteins in the ER membrane thus removing them from the ER surface. The protein is Sigma intracellular receptor 2 (TMEM97) of Bos taurus (Bovine).